Reading from the N-terminus, the 162-residue chain is Cyanate hydratase (162 aa).

Catalysis depends on residues Arg-103, Glu-106, and Ser-129.

Belongs to the cyanase family.

It carries out the reaction cyanate + hydrogencarbonate + 3 H(+) = NH4(+) + 2 CO2. In terms of biological role, catalyzes the reaction of cyanate with bicarbonate to produce ammonia and carbon dioxide. The protein is Cyanate hydratase of Phaeosphaeria nodorum (strain SN15 / ATCC MYA-4574 / FGSC 10173) (Glume blotch fungus).